Here is a 476-residue protein sequence, read N- to C-terminus: Aspartyl/glutamyl-tRNA(Asn/Gln) amidotransferase subunit B (476 aa).

This sequence belongs to the GatB/GatE family. GatB subfamily. In terms of assembly, heterotrimer of A, B and C subunits.

It catalyses the reaction L-glutamyl-tRNA(Gln) + L-glutamine + ATP + H2O = L-glutaminyl-tRNA(Gln) + L-glutamate + ADP + phosphate + H(+). The catalysed reaction is L-aspartyl-tRNA(Asn) + L-glutamine + ATP + H2O = L-asparaginyl-tRNA(Asn) + L-glutamate + ADP + phosphate + 2 H(+). Allows the formation of correctly charged Asn-tRNA(Asn) or Gln-tRNA(Gln) through the transamidation of misacylated Asp-tRNA(Asn) or Glu-tRNA(Gln) in organisms which lack either or both of asparaginyl-tRNA or glutaminyl-tRNA synthetases. The reaction takes place in the presence of glutamine and ATP through an activated phospho-Asp-tRNA(Asn) or phospho-Glu-tRNA(Gln). The polypeptide is Aspartyl/glutamyl-tRNA(Asn/Gln) amidotransferase subunit B (Bacillus pumilus (strain SAFR-032)).